Here is a 314-residue protein sequence, read N- to C-terminus: 4-hydroxy-3-methylbut-2-enyl diphosphate reductase (314 aa).

Cys-12 contacts [4Fe-4S] cluster. (2E)-4-hydroxy-3-methylbut-2-enyl diphosphate is bound by residues His-41 and His-74. The dimethylallyl diphosphate site is built by His-41 and His-74. Residues His-41 and His-74 each contribute to the isopentenyl diphosphate site. Cys-96 is a binding site for [4Fe-4S] cluster. (2E)-4-hydroxy-3-methylbut-2-enyl diphosphate is bound at residue His-124. Dimethylallyl diphosphate is bound at residue His-124. His-124 is an isopentenyl diphosphate binding site. Glu-126 acts as the Proton donor in catalysis. Residue Thr-167 participates in (2E)-4-hydroxy-3-methylbut-2-enyl diphosphate binding. [4Fe-4S] cluster is bound at residue Cys-197. (2E)-4-hydroxy-3-methylbut-2-enyl diphosphate is bound by residues Ser-225, Ser-226, Asn-227, and Ser-269. Dimethylallyl diphosphate is bound by residues Ser-225, Ser-226, Asn-227, and Ser-269. Positions 225, 226, 227, and 269 each coordinate isopentenyl diphosphate.

It belongs to the IspH family. [4Fe-4S] cluster serves as cofactor.

The catalysed reaction is isopentenyl diphosphate + 2 oxidized [2Fe-2S]-[ferredoxin] + H2O = (2E)-4-hydroxy-3-methylbut-2-enyl diphosphate + 2 reduced [2Fe-2S]-[ferredoxin] + 2 H(+). It catalyses the reaction dimethylallyl diphosphate + 2 oxidized [2Fe-2S]-[ferredoxin] + H2O = (2E)-4-hydroxy-3-methylbut-2-enyl diphosphate + 2 reduced [2Fe-2S]-[ferredoxin] + 2 H(+). It functions in the pathway isoprenoid biosynthesis; dimethylallyl diphosphate biosynthesis; dimethylallyl diphosphate from (2E)-4-hydroxy-3-methylbutenyl diphosphate: step 1/1. Its pathway is isoprenoid biosynthesis; isopentenyl diphosphate biosynthesis via DXP pathway; isopentenyl diphosphate from 1-deoxy-D-xylulose 5-phosphate: step 6/6. Functionally, catalyzes the conversion of 1-hydroxy-2-methyl-2-(E)-butenyl 4-diphosphate (HMBPP) into a mixture of isopentenyl diphosphate (IPP) and dimethylallyl diphosphate (DMAPP). Acts in the terminal step of the DOXP/MEP pathway for isoprenoid precursor biosynthesis. This chain is 4-hydroxy-3-methylbut-2-enyl diphosphate reductase, found in Actinobacillus pleuropneumoniae serotype 7 (strain AP76).